The sequence spans 293 residues: MPELPEVETVRLGLTPAMEGFRIARAVTNRDDLRFPLQKDFVARLTGQIVTGLGRRAKYLLADLASGDVLLMHLGMSGSFRVVAADGAHTPGEFHHPRSEDRTHDHVVFDMSSGARVIFNDPRRFGFMKIFPRAAIDDEPHLKGLGPEPLGNAFDAVMLARACAGKQTSLKAALLDQRVVAGLGNIYVCEALWRAHLSPKRKAATLANRKNEPTDHALRLTDAIRAVLGDAIKAGGSSLRDHRQTSGELGYFQHSFAAYDREGERCRTDGCGGAVKRFVQNGRSTFWCSGCQK.

Catalysis depends on Pro-2, which acts as the Schiff-base intermediate with DNA. The active-site Proton donor is the Glu-3. Lys-58 (proton donor; for beta-elimination activity) is an active-site residue. DNA contacts are provided by His-104, Arg-123, and Lys-166. An FPG-type zinc finger spans residues 257 to 293 (AAYDREGERCRTDGCGGAVKRFVQNGRSTFWCSGCQK). Arg-283 acts as the Proton donor; for delta-elimination activity in catalysis.

Belongs to the FPG family. As to quaternary structure, monomer. The cofactor is Zn(2+).

The catalysed reaction is Hydrolysis of DNA containing ring-opened 7-methylguanine residues, releasing 2,6-diamino-4-hydroxy-5-(N-methyl)formamidopyrimidine.. It catalyses the reaction 2'-deoxyribonucleotide-(2'-deoxyribose 5'-phosphate)-2'-deoxyribonucleotide-DNA = a 3'-end 2'-deoxyribonucleotide-(2,3-dehydro-2,3-deoxyribose 5'-phosphate)-DNA + a 5'-end 5'-phospho-2'-deoxyribonucleoside-DNA + H(+). Functionally, involved in base excision repair of DNA damaged by oxidation or by mutagenic agents. Acts as a DNA glycosylase that recognizes and removes damaged bases. Has a preference for oxidized purines, such as 7,8-dihydro-8-oxoguanine (8-oxoG). Has AP (apurinic/apyrimidinic) lyase activity and introduces nicks in the DNA strand. Cleaves the DNA backbone by beta-delta elimination to generate a single-strand break at the site of the removed base with both 3'- and 5'-phosphates. The polypeptide is Formamidopyrimidine-DNA glycosylase (Rhodopseudomonas palustris (strain BisB5)).